Consider the following 120-residue polypeptide: MFVNKKYTAKGKNLPSSPKKVRPIADNIRGKPYNEAVAILCSMPNKGAKLLGKVVKSAASNAMYHNRNLSEDMIFVKTVMVDDGRKRRSIWPRARGRADRLINRSCHIFVEVYEKMYGGE.

The tract at residues 1–25 (MFVNKKYTAKGKNLPSSPKKVRPIA) is disordered.

This sequence belongs to the universal ribosomal protein uL22 family. In terms of assembly, part of the 50S ribosomal subunit.

Functionally, this protein binds specifically to 23S rRNA; its binding is stimulated by other ribosomal proteins, e.g. L4, L17, and L20. It is important during the early stages of 50S assembly. It makes multiple contacts with different domains of the 23S rRNA in the assembled 50S subunit and ribosome. Its function is as follows. The globular domain of the protein is located near the polypeptide exit tunnel on the outside of the subunit, while an extended beta-hairpin is found that lines the wall of the exit tunnel in the center of the 70S ribosome. This Borrelia duttonii (strain Ly) protein is Large ribosomal subunit protein uL22.